Consider the following 294-residue polypeptide: Tyrosine recombinase XerC (294 aa).

One can recognise a Core-binding (CB) domain in the interval 1–85 (MSRLVEDFFA…ACRGFYTWLV (85 aa)). A Tyr recombinase domain is found at 106–283 (KLPRILDADE…DFQYLSKVYD (178 aa)). Catalysis depends on residues R145, K169, H235, R238, and H261. Y270 serves as the catalytic O-(3'-phospho-DNA)-tyrosine intermediate.

Belongs to the 'phage' integrase family. XerC subfamily. In terms of assembly, forms a cyclic heterotetrameric complex composed of two molecules of XerC and two molecules of XerD.

The protein localises to the cytoplasm. In terms of biological role, site-specific tyrosine recombinase, which acts by catalyzing the cutting and rejoining of the recombining DNA molecules. The XerC-XerD complex is essential to convert dimers of the bacterial chromosome into monomers to permit their segregation at cell division. It also contributes to the segregational stability of plasmids. In Xylella fastidiosa (strain M23), this protein is Tyrosine recombinase XerC.